The following is a 369-amino-acid chain: Allantoicase (369 aa).

The disordered stretch occupies residues 341–369 (PDSKNNNNNNNNNNNNNTSNSFKTSDRQQ). Over residues 345-357 (NNNNNNNNNNNNN) the composition is skewed to low complexity.

It belongs to the allantoicase family.

It catalyses the reaction allantoate + H2O = (S)-ureidoglycolate + urea. The protein operates within nitrogen metabolism; (S)-allantoin degradation; (S)-ureidoglycolate from allantoate (aminidohydrolase route): step 1/1. Utilization of purines as secondary nitrogen sources, when primary sources are limiting. The sequence is that of Allantoicase (allC) from Dictyostelium discoideum (Social amoeba).